The following is a 296-amino-acid chain: D-alanine--D-alanine ligase (296 aa).

One can recognise an ATP-grasp domain in the interval 103-293; the sequence is KEILMHHRMP…FDSFVKRIIE (191 aa). 129–180 lines the ATP pocket; sequence ISFPAAVKPSSGGSSIATFKVKSIQELKHAYEEASKYGEVMIEQWVTGKEIT. 3 residues coordinate Mg(2+): aspartate 247, glutamate 260, and asparagine 262.

It belongs to the D-alanine--D-alanine ligase family. The cofactor is Mg(2+). It depends on Mn(2+) as a cofactor.

It localises to the cytoplasm. It catalyses the reaction 2 D-alanine + ATP = D-alanyl-D-alanine + ADP + phosphate + H(+). Its pathway is cell wall biogenesis; peptidoglycan biosynthesis. In terms of biological role, cell wall formation. This Francisella tularensis subsp. holarctica (strain LVS) protein is D-alanine--D-alanine ligase.